Reading from the N-terminus, the 206-residue chain is Endoplasmic reticulum transmembrane protein YET-like (206 aa).

The Lumenal segment spans residues 1–2 (ME). A helical membrane pass occupies residues 3–23 (FLMTLVFLVLLVEIVFCTFFM). Residues 24–46 (LPVSMHLRKNVYNKLDKLFGGQN) lie on the Cytoplasmic side of the membrane. A helical transmembrane segment spans residues 47–67 (AKIFLKVLALLVIIVFCDSIV). At 68–101 (NSYNINKKLHTPELTGAKFDRQNEYTRMFRYQRN) the chain is on the lumenal side. A helical membrane pass occupies residues 102-122 (SYICGFCLYLFFLIYRSQGII). The Cytoplasmic portion of the chain corresponds to 123 to 206 (SQLSNVEASK…KKPKTQKKDD (84 aa)). Residues 140–198 (KNNLNTVETLLSENEKLKTEIKDLKKMEKEHKAMKSQAENTTKEYLKLQEEYNQLLGKK) are a coiled coil. Positions 203 to 206 (KKDD) match the Di-lysine motif motif.

This sequence belongs to the BCAP29/BCAP31 family.

The protein resides in the endoplasmic reticulum membrane. May play a role in anterograde transport of membrane proteins from the endoplasmic reticulum to the Golgi. In Dictyostelium discoideum (Social amoeba), this protein is Endoplasmic reticulum transmembrane protein YET-like.